The chain runs to 405 residues: Tryptophan synthase beta chain (405 aa).

N6-(pyridoxal phosphate)lysine is present on lysine 95.

The protein belongs to the TrpB family. In terms of assembly, tetramer of two alpha and two beta chains. Pyridoxal 5'-phosphate is required as a cofactor.

It carries out the reaction (1S,2R)-1-C-(indol-3-yl)glycerol 3-phosphate + L-serine = D-glyceraldehyde 3-phosphate + L-tryptophan + H2O. It participates in amino-acid biosynthesis; L-tryptophan biosynthesis; L-tryptophan from chorismate: step 5/5. Functionally, the beta subunit is responsible for the synthesis of L-tryptophan from indole and L-serine. This chain is Tryptophan synthase beta chain, found in Pseudomonas putida (strain ATCC 700007 / DSM 6899 / JCM 31910 / BCRC 17059 / LMG 24140 / F1).